The following is a 440-amino-acid chain: Tol-Pal system protein TolB (440 aa).

A signal peptide spans 1–21 (MKIFGKWLLVTLLICSMPVKA).

Belongs to the TolB family. The Tol-Pal system is composed of five core proteins: the inner membrane proteins TolA, TolQ and TolR, the periplasmic protein TolB and the outer membrane protein Pal. They form a network linking the inner and outer membranes and the peptidoglycan layer.

Its subcellular location is the periplasm. In terms of biological role, part of the Tol-Pal system, which plays a role in outer membrane invagination during cell division and is important for maintaining outer membrane integrity. The sequence is that of Tol-Pal system protein TolB from Shewanella halifaxensis (strain HAW-EB4).